A 107-amino-acid chain; its full sequence is Nucleoid-associated protein Mmar10_0436 (107 aa).

It belongs to the YbaB/EbfC family. Homodimer.

The protein localises to the cytoplasm. The protein resides in the nucleoid. Functionally, binds to DNA and alters its conformation. May be involved in regulation of gene expression, nucleoid organization and DNA protection. The sequence is that of Nucleoid-associated protein Mmar10_0436 from Maricaulis maris (strain MCS10) (Caulobacter maris).